An 85-amino-acid polypeptide reads, in one-letter code: Large ribosomal subunit protein bL27 (85 aa).

The interval 1–25 is disordered; it reads MAHKKGVGSSRNGRDSNPKMLGVKR.

The protein belongs to the bacterial ribosomal protein bL27 family.

The sequence is that of Large ribosomal subunit protein bL27 from Roseiflexus castenholzii (strain DSM 13941 / HLO8).